The sequence spans 798 residues: Integrin beta-1 (798 aa).

An N-terminal signal peptide occupies residues 1–20; that stretch reads MNLQLIFWIGLISSVCCVFG. Topologically, residues 21 to 728 are extracellular; sequence QADENRCLKA…ETPECPTGPD (708 aa). A PSI domain is found at 26-76; sequence RCLKANAKSCGECIQAGPNCGWCTNSTFLQEGMPTSARCDDLEALKKKGCH. 28 cysteine pairs are disulfide-bonded: C27-C45, C35-C464, C38-C64, C48-C75, C207-C213, C261-C301, C401-C415, C435-C462, C466-C486, C477-C489, C491-C500, C502-C533, C516-C531, C525-C536, C538-C553, C555-C576, C560-C574, C568-C579, C581-C590, C592-C615, C599-C613, C607-C618, C620-C630, C633-C636, C640-C691, C646-C665, C649-C661, and C699-C723. An N-linked (GlcNAc...) asparagine glycan is attached at N50. Residues 75 to 91 are compositionally biased toward basic and acidic residues; that stretch reads CHPNDIENPRGSKDIKK. The disordered stretch occupies residues 75–105; sequence CHPNDIENPRGSKDIKKNKNVTNRSKGTAEK. N-linked (GlcNAc...) asparagine glycans are attached at residues N94 and N97. Residues 140–378 enclose the VWFA domain; sequence DYPIDLYYLM…QLIIDAYNSL (239 aa). Residues S152 and S154 each contribute to the Mg(2+) site. The Ca(2+) site is built by S154, D157, D158, and E189. Residues 207–213 are CX3CL1-binding; it reads CTNEQNC. N-linked (GlcNAc...) asparagine glycosylation is present at N212. The Ca(2+) site is built by N244, D246, P248, and E249. E249 provides a ligand contact to Mg(2+). A glycan (N-linked (GlcNAc...) asparagine) is linked at N269. The tract at residues 295 to 314 is CX3CL1-binding; it reads LPNDGQCHLENDVYTMSHYY. A362 serves as a coordination point for Ca(2+). N363, N406, and N417 each carry an N-linked (GlcNAc...) asparagine glycan. The segment at 383 to 465 is interaction with TMEM182; that stretch reads ILENSKLPEG…IILQFICECE (83 aa). 4 I-EGF domains span residues 466–501, 502–554, 555–591, and 592–631; these read CQGE…RHCE, CSTD…KFCE, CDNF…SACD, and CSLD…PTCE. N-linked (GlcNAc...) asparagine glycosylation occurs at N481. N520 carries N-linked (GlcNAc...) asparagine glycosylation. Residue N584 is glycosylated (N-linked (GlcNAc...) asparagine). N669 carries N-linked (GlcNAc...) asparagine glycosylation. Residues 729-749 form a helical membrane-spanning segment; that stretch reads IIPIVAGVVAGIVLIGLALLL. Residues 750–798 lie on the Cytoplasmic side of the membrane; it reads IWKLLMIIHDRREFAKFEKEKMNAKWDTGENPIYKSAVTTVVNPKYEGK. Residues 762–767 form a signal for sorting from recycling endosomes; interaction with ACAP1 region; it reads EFAKFE. T777 is modified (phosphothreonine). Y783 carries the phosphotyrosine modification. S785 carries the phosphoserine modification. An interaction with ITGB1BP1 region spans residues 785 to 792; sequence SAVTTVVN. At T789 the chain carries Phosphothreonine. K794 carries the post-translational modification N6-acetyllysine; alternate. K794 participates in a covalent cross-link: Glycyl lysine isopeptide (Lys-Gly) (interchain with G-Cter in SUMO1); alternate.

The protein belongs to the integrin beta chain family. Interacts with seprase FAP (seprase); the interaction occurs at the cell surface of invadopodia membrane in a collagen-dependent manner. Heterodimer of an alpha and a beta subunit. Beta-1 associates with either alpha-1, alpha-2, alpha-3, alpha-4, alpha-5, alpha-6, alpha-7, alpha-8, alpha-9, alpha-10, alpha-11 or alpha-V. ITGA6:ITGB1 is found in a complex with CD9; interaction takes place in oocytes and is involved in sperm-egg fusion. Binds LGALS3BP and NMRK2, when associated with alpha-7, but not with alpha-5. Interacts with FLNB, FLNC and RANBP9. Interacts with KRT1 in the presence of RACK1 and SRC. Interacts with JAML; integrin alpha-4/beta-1 may regulate leukocyte to endothelial cells adhesion by controlling JAML homodimerization. Interacts with RAB21. Interacts (via the cytoplasmic region) with RAB25 (via the hypervariable C-terminal region). Interacts with MYO10. Interacts with ITGB1BP1 (via C-terminal region); the interaction is a prerequisite for focal adhesion disassembly. Interacts with TLN1; the interaction is prevented by competitive binding of ITGB1BP1. Interacts with ACAP1; required for ITGB1 recycling. Interacts with ASAP3. Interacts with FERMT2; the interaction is inhibited in presence of ITGB1BP1. Interacts with DAB2. Interacts with FGR and HCK. Interacts with EMP2; the interaction may be direct or indirect and ITGB1 has a heterodimer form. ITGA5:ITGB1 interacts with CCN3. ITGA4:ITGB1 is found in a ternary complex with CX3CR1 and CX3CL1. ITGA5:ITGB1 interacts with FBN1. ITGA5:ITGB1 interacts with IL1B. Interacts with MDK. ITGA4:ITGB1 interacts with MDK; this interaction mediates MDK-induced osteoblast cells migration through PXN phosphorylation. ITGA6:ITGB1 interacts with MDK; this interaction mediates MDK-induced neurite-outgrowth. ITGA5:ITGB1 interacts with ACE2. Interacts with TMEM182 and LAMB1. Interacts with tensin TNS3; TNS3 also interacts with PEAK1, thus acting as an adapter molecule to bridge the association of PEAK1 with ITGB1. Interacts with tensin TNS4; the interaction displaces tensin TNS3 from the ITGB1 cytoplasmic tail and promotes ITGB1 stability. Integrin ITGA9:ITGB1 interacts with SPP1/OPN (via N-terminus). Integrin ITGA9:ITGB1 interacts with TNC/TNFN3 (via the 3rd Fibronectin type-III domain). Integrins ITGA4:ITGB1 and ITGA9:ITGB1 interact with SVEP1 (via Sushi domain 21); thereby inhibit Ca(2+) intracellular signaling and as a result repress vasocontraction. ITGA4:ITGB1 and ITGA5:ITGB1 interacts with SELP. Interacts with CD248. ITGA5:ITGB1 interacts with IGFBP1. ITGA4:ITGB1 interacts with BCAM. Interacts with ADGRG6. As to quaternary structure, interacts with the C-terminal region of FLNC. Interacts with filamin FLNA isoform 3/VAR-1. In terms of assembly, interacts with ACE2. Interacts with alpha-7B in cardiomyocytes of adult heart and alpha-7A and alpha-7B in adult skeletal muscle. Interacts with filamin FLNA isoform 3/VAR-1.

It localises to the cell membrane. Its subcellular location is the cell projection. The protein localises to the invadopodium membrane. It is found in the ruffle membrane. The protein resides in the recycling endosome. It localises to the melanosome. Its subcellular location is the lamellipodium. The protein localises to the ruffle. It is found in the cell junction. The protein resides in the focal adhesion. It localises to the sarcolemma. Its function is as follows. Integrins alpha-1/beta-1, alpha-2/beta-1, alpha-10/beta-1 and alpha-11/beta-1 are receptors for collagen. Integrins alpha-1/beta-1 and alpha-2/beta-2 recognize the proline-hydroxylated sequence G-F-P-G-E-R in collagen. Integrins alpha-2/beta-1, alpha-3/beta-1, alpha-4/beta-1, alpha-5/beta-1, alpha-8/beta-1, alpha-10/beta-1, alpha-11/beta-1 and alpha-V/beta-1 are receptors for fibronectin. Alpha-4/beta-1 recognizes one or more domains within the alternatively spliced CS-1 and CS-5 regions of fibronectin. Integrin alpha-5/beta-1 is a receptor for fibrinogen. Integrin alpha-1/beta-1, alpha-2/beta-1, alpha-6/beta-1 and alpha-7/beta-1 are receptors for lamimin. Integrin alpha-6/beta-1 (ITGA6:ITGB1) is present in oocytes and is involved in sperm-egg fusion. Integrin alpha-4/beta-1 is a receptor for VCAM1 and recognizes the sequence Q-I-D-S in VCAM1. Integrin alpha-9/beta-1 is a receptor for VCAM1, cytotactin and osteopontin. It recognizes the sequence A-E-I-D-G-I-E-L in cytotactin. Integrin alpha-3/beta-1 is a receptor for epiligrin, thrombospondin and CSPG4. Integrin alpha-3/beta-1 provides a docking site for FAP (seprase) at invadopodia plasma membranes in a collagen-dependent manner and hence may participate in the adhesion, formation of invadopodia and matrix degradation processes, promoting cell invasion. Alpha-3/beta-1 may mediate with LGALS3 the stimulation by CSPG4 of endothelial cells migration. Integrin alpha-V/beta-1 is a receptor for vitronectin. Beta-1 integrins recognize the sequence R-G-D in a wide array of ligands. When associated with alpha-7/beta-1 integrin, regulates cell adhesion and laminin matrix deposition. Involved in promoting endothelial cell motility and angiogenesis. Involved in osteoblast compaction through the fibronectin fibrillogenesis cell-mediated matrix assembly process and the formation of mineralized bone nodules. May be involved in up-regulation of the activity of kinases such as PKC via binding to KRT1. Together with KRT1 and RACK1, serves as a platform for SRC activation or inactivation. Plays a mechanistic adhesive role during telophase, required for the successful completion of cytokinesis. ITGA4:ITGB1 binds to fractalkine (CX3CL1) and may act as its coreceptor in CX3CR1-dependent fractalkine signaling. ITGA4:ITGB1 and ITGA5:ITGB1 bind to PLA2G2A via a site (site 2) which is distinct from the classical ligand-binding site (site 1) and this induces integrin conformational changes and enhanced ligand binding to site 1. ITGA5:ITGB1 acts as a receptor for fibrillin-1 (FBN1) and mediates R-G-D-dependent cell adhesion to FBN1. ITGA5:ITGB1 acts as a receptor for fibronectin FN1 and mediates R-G-D-dependent cell adhesion to FN1. ITGA5:ITGB1 is a receptor for IL1B and binding is essential for IL1B signaling. ITGA5:ITGB3 is a receptor for soluble CD40LG and is required for CD40/CD40LG signaling. Plays an important role in myoblast differentiation and fusion during skeletal myogenesis. ITGA9:ITGB1 may play a crucial role in SVEP1/polydom-mediated myoblast cell adhesion. Integrins ITGA9:ITGB1 and ITGA4:ITGB1 repress PRKCA-mediated L-type voltage-gated channel Ca(2+) influx and ROCK-mediated calcium sensitivity in vascular smooth muscle cells via their interaction with SVEP1, thereby inhibit vasocontraction. The sequence is that of Integrin beta-1 (ITGB1) from Bos taurus (Bovine).